The primary structure comprises 575 residues: Probable ferredoxin/ferredoxin--NADP reductase (575 aa).

2 consecutive 4Fe-4S ferredoxin-type domains span residues 2–29 and 37–66; these read PHVITQSCCNDASCVFACPVNCIHPTPD and EMLYIDPVACVDCGACVTACPVSAIAPNTR. Positions 9, 15, 19, 46, 49, 52, and 56 each coordinate [4Fe-4S] cluster. The tract at residues 115-575 is ferredoxin--NADP reductase; the sequence is VAVVGSGPAA…GQPIVLTVPL (461 aa). FAD is bound by residues alanine 123, glutamate 143, leucine 151, and isoleucine 187. NADP(+)-binding positions include arginine 213, 258-261, 302-303, and glutamate 314; these read NGNV and RR. FAD-binding positions include tryptophan 456 and 463–465; that span reads GFI. Residue glycine 463 participates in NADP(+) binding.

It in the C-terminal section; belongs to the ferredoxin--NADP reductase family. Requires [4Fe-4S] cluster as cofactor. FAD is required as a cofactor.

The enzyme catalyses 2 reduced [2Fe-2S]-[ferredoxin] + NADP(+) + H(+) = 2 oxidized [2Fe-2S]-[ferredoxin] + NADPH. The polypeptide is Probable ferredoxin/ferredoxin--NADP reductase (fprB) (Mycobacterium bovis (strain ATCC BAA-935 / AF2122/97)).